The primary structure comprises 99 residues: Small ribosomal subunit protein bS18 (99 aa).

Positions 1–25 are enriched in basic and acidic residues; the sequence is MAEDHPSVDLDTHLSSPRESEESAP. The interval 1–28 is disordered; sequence MAEDHPSVDLDTHLSSPRESEESAPKKN.

Belongs to the bacterial ribosomal protein bS18 family. Part of the 30S ribosomal subunit. Forms a tight heterodimer with protein bS6.

Binds as a heterodimer with protein bS6 to the central domain of the 16S rRNA, where it helps stabilize the platform of the 30S subunit. The sequence is that of Small ribosomal subunit protein bS18 from Treponema pallidum (strain Nichols).